A 955-amino-acid polypeptide reads, in one-letter code: UvrABC system protein A (955 aa).

An ATP-binding site is contributed by 35 to 42 (GLSGSGKS). ABC transporter domains lie at 322–601 (WGST…EESI) and 621–951 (GHDN…RYLK). 654-661 (GVSGSGKS) contributes to the ATP binding site. Residues 754-780 (CEACQGDGLIKIEMHFLPDVYVKCDIC) form a C4-type zinc finger.

This sequence belongs to the ABC transporter superfamily. UvrA family. In terms of assembly, forms a heterotetramer with UvrB during the search for lesions.

It localises to the cytoplasm. In terms of biological role, the UvrABC repair system catalyzes the recognition and processing of DNA lesions. UvrA is an ATPase and a DNA-binding protein. A damage recognition complex composed of 2 UvrA and 2 UvrB subunits scans DNA for abnormalities. When the presence of a lesion has been verified by UvrB, the UvrA molecules dissociate. The protein is UvrABC system protein A of Rickettsia felis (strain ATCC VR-1525 / URRWXCal2) (Rickettsia azadi).